The primary structure comprises 285 residues: uncharacterized protein (285 aa).

The signal sequence occupies residues 1–25; the sequence is MVKKWLIQFAVMLSVLSTFTYSASA.

This is an uncharacterized protein from Bacillus subtilis (strain 168).